We begin with the raw amino-acid sequence, 800 residues long: Phenylalanine--tRNA ligase beta subunit (800 aa).

Positions 39 to 154 constitute a tRNA-binding domain; it reads TKDIKNLVVG…EAQVPGTDAL (116 aa). Residues 408 to 483 enclose the B5 domain; it reads AFITPIDITA…RIYGYDDIPS (76 aa). Positions 461, 467, 470, and 471 each coordinate Mg(2+). One can recognise an FDX-ACB domain in the interval 708–800; it reads PRFPGMSRDI…ALIEQGAVIR (93 aa).

The protein belongs to the phenylalanyl-tRNA synthetase beta subunit family. Type 1 subfamily. In terms of assembly, tetramer of two alpha and two beta subunits. The cofactor is Mg(2+).

Its subcellular location is the cytoplasm. It catalyses the reaction tRNA(Phe) + L-phenylalanine + ATP = L-phenylalanyl-tRNA(Phe) + AMP + diphosphate + H(+). The sequence is that of Phenylalanine--tRNA ligase beta subunit from Staphylococcus aureus (strain USA300).